The following is a 189-amino-acid chain: Glucose-6-phosphate isomerase (189 aa).

Positions 88, 90, 97, and 136 each coordinate Fe cation.

It belongs to the archaeal-type GPI family. Homodimer. Fe cation is required as a cofactor.

Its subcellular location is the cytoplasm. The enzyme catalyses alpha-D-glucose 6-phosphate = beta-D-fructose 6-phosphate. It participates in carbohydrate degradation; glycolysis; D-glyceraldehyde 3-phosphate and glycerone phosphate from D-glucose: step 2/4. The sequence is that of Glucose-6-phosphate isomerase (pgiA) from Pyrococcus horikoshii (strain ATCC 700860 / DSM 12428 / JCM 9974 / NBRC 100139 / OT-3).